The sequence spans 200 residues: Nascent polypeptide-associated complex subunit alpha (200 aa).

Residues 1–19 (MADPRIEELPDEETKKPTV) show a composition bias toward basic and acidic residues. Disordered stretches follow at residues 1 to 52 (MADP…SRNE) and 120 to 165 (QQLA…EDKD). Positions 20 to 34 (EELDESSDEESDAEA) are enriched in acidic residues. The 66-residue stretch at 49-114 (SRNEKKARKA…AKIEDLNASA (66 aa)) folds into the NAC-A/B domain. The span at 127–143 (AEHDHAGHTHDHKHEAA) shows a compositional bias: basic and acidic residues. Residues 144–160 (KEEEEEEDDGEEVDAEG) show a composition bias toward acidic residues. Residues 161–200 (IEDKDIELVMTQANVSRKKAIKALKENDNDIVNSIMALSV) form the UBA domain.

The protein belongs to the NAC-alpha family. Part of the nascent polypeptide-associated complex (NAC), consisting of EGD2 and EGD1. NAC associates with ribosomes via EGD1.

Its subcellular location is the cytoplasm. The protein localises to the nucleus. Functionally, component of the nascent polypeptide-associated complex (NAC), a dynamic component of the ribosomal exit tunnel, protecting the emerging polypeptides from interaction with other cytoplasmic proteins to ensure appropriate nascent protein targeting. The NAC complex also promotes mitochondrial protein import by enhancing productive ribosome interactions with the outer mitochondrial membrane and blocks the inappropriate interaction of ribosomes translating non-secretory nascent polypeptides with translocation sites in the membrane of the endoplasmic reticulum. EGD2 may also be involved in transcription regulation. In Chaetomium globosum (strain ATCC 6205 / CBS 148.51 / DSM 1962 / NBRC 6347 / NRRL 1970) (Soil fungus), this protein is Nascent polypeptide-associated complex subunit alpha (EGD2).